Here is a 194-residue protein sequence, read N- to C-terminus: Peptidyl-tRNA hydrolase (194 aa).

Position 17 (Y17) interacts with tRNA. H22 functions as the Proton acceptor in the catalytic mechanism. 3 residues coordinate tRNA: F68, N70, and N116.

Belongs to the PTH family. As to quaternary structure, monomer.

The protein localises to the cytoplasm. It catalyses the reaction an N-acyl-L-alpha-aminoacyl-tRNA + H2O = an N-acyl-L-amino acid + a tRNA + H(+). In terms of biological role, hydrolyzes ribosome-free peptidyl-tRNAs (with 1 or more amino acids incorporated), which drop off the ribosome during protein synthesis, or as a result of ribosome stalling. Catalyzes the release of premature peptidyl moieties from peptidyl-tRNA molecules trapped in stalled 50S ribosomal subunits, and thus maintains levels of free tRNAs and 50S ribosomes. The sequence is that of Peptidyl-tRNA hydrolase from Glaesserella parasuis serovar 5 (strain SH0165) (Haemophilus parasuis).